Reading from the N-terminus, the 377-residue chain is Chaperone protein DnaJ (377 aa).

Residues 5-70 form the J domain; sequence DYYEVLGVGR…NKKAAYDQFG (66 aa). The segment at 133 to 211 adopts a CR-type zinc-finger fold; that stretch reads GLTKELRIPT…CHGDGRVEKT (79 aa). Zn(2+) is bound by residues Cys146, Cys149, Cys163, Cys166, Cys185, Cys188, Cys199, and Cys202. CXXCXGXG motif repeat units lie at residues 146 to 153, 163 to 170, 185 to 192, and 199 to 206; these read CDVCDGSG, CGTCHGQG, CPTCHGRG, and CTKCHGDG.

It belongs to the DnaJ family. In terms of assembly, homodimer. It depends on Zn(2+) as a cofactor.

The protein resides in the cytoplasm. Participates actively in the response to hyperosmotic and heat shock by preventing the aggregation of stress-denatured proteins and by disaggregating proteins, also in an autonomous, DnaK-independent fashion. Unfolded proteins bind initially to DnaJ; upon interaction with the DnaJ-bound protein, DnaK hydrolyzes its bound ATP, resulting in the formation of a stable complex. GrpE releases ADP from DnaK; ATP binding to DnaK triggers the release of the substrate protein, thus completing the reaction cycle. Several rounds of ATP-dependent interactions between DnaJ, DnaK and GrpE are required for fully efficient folding. Also involved, together with DnaK and GrpE, in the DNA replication of plasmids through activation of initiation proteins. This is Chaperone protein DnaJ from Shewanella sp. (strain MR-4).